A 115-amino-acid chain; its full sequence is UPF0212 protein MJ0068 (115 aa).

The protein belongs to the UPF0212 family.

In Methanocaldococcus jannaschii (strain ATCC 43067 / DSM 2661 / JAL-1 / JCM 10045 / NBRC 100440) (Methanococcus jannaschii), this protein is UPF0212 protein MJ0068.